We begin with the raw amino-acid sequence, 135 residues long: Sex-regulated protein janus-A (135 aa).

Substrate is bound at residue K37. The active-site Proton acceptor is the H63. Residue 104 to 106 (SQG) participates in substrate binding.

The protein belongs to the janus family.

JanA and janB regulate somatic sex differentiation. This Drosophila mauritiana (Fruit fly) protein is Sex-regulated protein janus-A (janA).